Reading from the N-terminus, the 103-residue chain is Large ribosomal subunit protein bL21 (103 aa).

Belongs to the bacterial ribosomal protein bL21 family. In terms of assembly, part of the 50S ribosomal subunit. Contacts protein L20.

Functionally, this protein binds to 23S rRNA in the presence of protein L20. The polypeptide is Large ribosomal subunit protein bL21 (Hamiltonella defensa subsp. Acyrthosiphon pisum (strain 5AT)).